Reading from the N-terminus, the 131-residue chain is Histone H2A.2 (131 aa).

The disordered stretch occupies residues 1-22; sequence MSGGKGKAGSSEKASTSRSAKA. N-acetylserine is present on S2. An N6-acetyllysine mark is found at K5 and K7. The residue at position 105 (Q105) is an N5-methylglutamine. A Phosphoserine modification is found at S128. The [ST]-Q motif signature appears at 128 to 129; the sequence is SQ.

The protein belongs to the histone H2A family. In terms of assembly, the nucleosome is a histone octamer containing two molecules each of H2A, H2B, H3 and H4 assembled in one H3-H4 heterotetramer and two H2A-H2B heterodimers. The octamer wraps approximately 147 bp of DNA. Post-translationally, phosphorylated to form H2AS128ph (gamma-H2A) in response to DNA double-strand breaks (DSBs) generated by exogenous genotoxic agents and by stalled replication forks. Phosphorylation is dependent on the DNA damage checkpoint kinases MEC1/ATR and TEL1/ATM, spreads on either side of a detected DSB site and may mark the surrounding chromatin for recruitment of proteins required for DNA damage signaling and repair. Gamma-H2A is removed from the DNA prior to the strand invasion-primer extension step of the repair process and subsequently dephosphorylated. Dephosphorylation is necessary for efficient recovery from the DNA damage checkpoint. In terms of processing, acetylated by ESA1 to form H2AK4ac and H2AK7ac.

It localises to the nucleus. Its subcellular location is the chromosome. Core component of nucleosome which plays a central role in DNA double strand break (DSB) repair. Nucleosomes wrap and compact DNA into chromatin, limiting DNA accessibility to the cellular machineries which require DNA as a template. Histones thereby play a central role in transcription regulation, DNA repair, DNA replication and chromosomal stability. DNA accessibility is regulated via a complex set of post-translational modifications of histones, also called histone code, and nucleosome remodeling. The protein is Histone H2A.2 (HTA2) of Debaryomyces hansenii (strain ATCC 36239 / CBS 767 / BCRC 21394 / JCM 1990 / NBRC 0083 / IGC 2968) (Yeast).